The chain runs to 202 residues: NADH:(hydroxy)cinnamate reductase subunit CrdA (202 aa).

This sequence belongs to the NADH-dependent flavin reductase family. NADH:(hydroxy)cinnamate reductase Crd is a heterodimer composed of CrdA and CrdB subunits, encoded by adjacent genes. Requires FMN as cofactor.

Functionally, component of the NADH:(hydroxy)cinnamate reductase. CrdA is probably reduced by NADH and then transfers the electrons to the catalytic center of CrdB. Is likely involved in protecting V.ruber from (hydroxy)cinnamate poisoning. This is NADH:(hydroxy)cinnamate reductase subunit CrdA from Vibrio ruber (strain DSM 16370 / JCM 11486 / BCRC 17186 / CECT 7878 / LMG 23124 / VR1).